The following is a 107-amino-acid chain: Small ribosomal subunit protein uS10m (107 aa).

Belongs to the universal ribosomal protein uS10 family.

The protein resides in the mitochondrion. This is Small ribosomal subunit protein uS10m (RPS10) from Prototheca wickerhamii.